Consider the following 710-residue polypeptide: Elongation factor G (710 aa).

The region spanning 8–297 (ERVRNIGIAA…AVVDYLPSPI (290 aa)) is the tr-type G domain. GTP-binding positions include 17 to 24 (AHIDAGKT), 96 to 100 (DTPGH), and 150 to 153 (NKMD).

It belongs to the TRAFAC class translation factor GTPase superfamily. Classic translation factor GTPase family. EF-G/EF-2 subfamily.

Its subcellular location is the cytoplasm. Functionally, catalyzes the GTP-dependent ribosomal translocation step during translation elongation. During this step, the ribosome changes from the pre-translocational (PRE) to the post-translocational (POST) state as the newly formed A-site-bound peptidyl-tRNA and P-site-bound deacylated tRNA move to the P and E sites, respectively. Catalyzes the coordinated movement of the two tRNA molecules, the mRNA and conformational changes in the ribosome. This is Elongation factor G from Synechococcus sp. (strain JA-3-3Ab) (Cyanobacteria bacterium Yellowstone A-Prime).